The primary structure comprises 85 residues: UPF0291 protein SAK_0343 (85 aa).

Residues 58–85 form a disordered region; it reads GNDVTPEKLRQVQREKGLHGRSLDDPNS. Over residues 62–85 the composition is skewed to basic and acidic residues; that stretch reads TPEKLRQVQREKGLHGRSLDDPNS.

This sequence belongs to the UPF0291 family.

It localises to the cytoplasm. In Streptococcus agalactiae serotype Ia (strain ATCC 27591 / A909 / CDC SS700), this protein is UPF0291 protein SAK_0343.